The following is a 172-amino-acid chain: Large ribosomal subunit protein uL10 (172 aa).

The protein belongs to the universal ribosomal protein uL10 family. Part of the ribosomal stalk of the 50S ribosomal subunit. The N-terminus interacts with L11 and the large rRNA to form the base of the stalk. The C-terminus forms an elongated spine to which L12 dimers bind in a sequential fashion forming a multimeric L10(L12)X complex.

Forms part of the ribosomal stalk, playing a central role in the interaction of the ribosome with GTP-bound translation factors. This chain is Large ribosomal subunit protein uL10, found in Acidothermus cellulolyticus (strain ATCC 43068 / DSM 8971 / 11B).